The following is a 66-amino-acid chain: Large ribosomal subunit protein bL31 (66 aa).

Zn(2+) contacts are provided by Cys16, Cys18, Cys36, and Cys39.

The protein belongs to the bacterial ribosomal protein bL31 family. Type A subfamily. As to quaternary structure, part of the 50S ribosomal subunit. Zn(2+) is required as a cofactor.

Functionally, binds the 23S rRNA. The sequence is that of Large ribosomal subunit protein bL31 from Sulfurovum sp. (strain NBC37-1).